The chain runs to 317 residues: Ribosomal protein L11 methyltransferase (317 aa).

Threonine 162, glycine 183, aspartate 205, and asparagine 248 together coordinate S-adenosyl-L-methionine.

This sequence belongs to the methyltransferase superfamily. PrmA family.

It is found in the cytoplasm. It catalyses the reaction L-lysyl-[protein] + 3 S-adenosyl-L-methionine = N(6),N(6),N(6)-trimethyl-L-lysyl-[protein] + 3 S-adenosyl-L-homocysteine + 3 H(+). Methylates ribosomal protein L11. This chain is Ribosomal protein L11 methyltransferase, found in Alkaliphilus metalliredigens (strain QYMF).